Consider the following 290-residue polypeptide: Pyridoxal kinase PdxY (290 aa).

Substrate is bound by residues Ser-12 and 47-48 (TQ). ATP-binding positions include Asp-114, Glu-151, Lys-184, and 211-214 (RPLL). Asp-225 contributes to the substrate binding site.

This sequence belongs to the pyridoxine kinase family. PdxY subfamily. As to quaternary structure, homodimer. Mg(2+) is required as a cofactor.

It catalyses the reaction pyridoxal + ATP = pyridoxal 5'-phosphate + ADP + H(+). The protein operates within cofactor metabolism; pyridoxal 5'-phosphate salvage; pyridoxal 5'-phosphate from pyridoxal: step 1/1. Its function is as follows. Pyridoxal kinase involved in the salvage pathway of pyridoxal 5'-phosphate (PLP). Catalyzes the phosphorylation of pyridoxal to PLP. This is Pyridoxal kinase PdxY from Pseudomonas fluorescens (strain SBW25).